The primary structure comprises 517 residues: Crotonobetaine/carnitine--CoA ligase (517 aa).

Belongs to the ATP-dependent AMP-binding enzyme family.

It carries out the reaction 4-(trimethylamino)butanoate + ATP + CoA = 4-(trimethylamino)butanoyl-CoA + AMP + diphosphate. It catalyses the reaction crotonobetaine + ATP + CoA = crotonobetainyl-CoA + AMP + diphosphate. The catalysed reaction is (R)-carnitine + ATP + CoA = (R)-carnitinyl-CoA + AMP + diphosphate. It functions in the pathway amine and polyamine metabolism; carnitine metabolism. Its function is as follows. Catalyzes the transfer of CoA to carnitine, generating the initial carnitinyl-CoA needed for the CaiB reaction cycle. Also has activity toward crotonobetaine and gamma-butyrobetaine. The chain is Crotonobetaine/carnitine--CoA ligase from Salmonella arizonae (strain ATCC BAA-731 / CDC346-86 / RSK2980).